A 555-amino-acid chain; its full sequence is Formate--tetrahydrofolate ligase (555 aa).

An ATP-binding site is contributed by 65–72 (TPAGEGKT).

Belongs to the formate--tetrahydrofolate ligase family.

It catalyses the reaction (6S)-5,6,7,8-tetrahydrofolate + formate + ATP = (6R)-10-formyltetrahydrofolate + ADP + phosphate. Its pathway is one-carbon metabolism; tetrahydrofolate interconversion. This is Formate--tetrahydrofolate ligase from Syntrophomonas wolfei subsp. wolfei (strain DSM 2245B / Goettingen).